The primary structure comprises 353 residues: MTIAVGRVTKEENDLFPLIDDWLRRDRFVFVGWSGLLLFPCAYFALGGWFTGTTFVTSWYTHGLASSYLEGCNFLTAAVSTPANSLAHSLLLLWGPEAQGDFTRWSQLGGLWTFLALHGAFALIGFMLRQFELARPVQLRPYNAISFSGPIAVFLSVFLIYPLGQSGWFFSPSFGVAAIFRFILFFQGFHNWTLKPFHMMGVAGVLGAVLLCAIHGATVENTLFEDGDGANTFRAFNPTQAEETYSMVTANRFWSQIFGVAFSNKRWLHFFMLFVPVTGLWMSAIGVVGLALNLRAYDFVSQEIRAAEDPEFETFYTKNILLNEGIRAWMAAQDQPHENLIFPEEVLPRGNAL.

Threonine 2 is subject to N-acetylthreonine. Residue threonine 2 is modified to Phosphothreonine. A helical membrane pass occupies residues 41–61 (CAYFALGGWFTGTTFVTSWYT). Chlorophyll a is bound at residue histidine 118. A helical transmembrane segment spans residues 125–141 (GFMLRQFELARPVQLRP). The pheophytin a site is built by glutamine 130 and asparagine 143. The chain crosses the membrane as a helical span at residues 153-166 (VFLSVFLIYPLGQS). Histidine 198 is a binding site for chlorophyll a. The helical transmembrane segment at 208 to 228 (AVLLCAIHGATVENTLFEDGD) threads the bilayer. Residues histidine 215 and phenylalanine 262 each contribute to the a plastoquinone site. A Fe cation-binding site is contributed by histidine 215. Histidine 269 serves as a coordination point for Fe cation. A helical transmembrane segment spans residues 279 to 295 (GLWMSAIGVVGLALNLR).

The protein belongs to the reaction center PufL/M/PsbA/D family. PSII is composed of 1 copy each of membrane proteins PsbA, PsbB, PsbC, PsbD, PsbE, PsbF, PsbH, PsbI, PsbJ, PsbK, PsbL, PsbM, PsbT, PsbX, PsbY, PsbZ, Psb30/Ycf12, at least 3 peripheral proteins of the oxygen-evolving complex and a large number of cofactors. It forms dimeric complexes. The D1/D2 heterodimer binds P680, chlorophylls that are the primary electron donor of PSII, and subsequent electron acceptors. It shares a non-heme iron and each subunit binds pheophytin, quinone, additional chlorophylls, carotenoids and lipids. There is also a Cl(-1) ion associated with D1 and D2, which is required for oxygen evolution. The PSII complex binds additional chlorophylls, carotenoids and specific lipids. is required as a cofactor. Only phosphorylated in mesophyll cells, phosphorylation increases when cells are grown under high rather than low light regimes (70 vs 900 umol photons/m-2/s).

Its subcellular location is the plastid. The protein resides in the chloroplast thylakoid membrane. It carries out the reaction 2 a plastoquinone + 4 hnu + 2 H2O = 2 a plastoquinol + O2. Photosystem II (PSII) is a light-driven water:plastoquinone oxidoreductase that uses light energy to abstract electrons from H(2)O, generating O(2) and a proton gradient subsequently used for ATP formation. It consists of a core antenna complex that captures photons, and an electron transfer chain that converts photonic excitation into a charge separation. The D1/D2 (PsbA/PsbD) reaction center heterodimer binds P680, the primary electron donor of PSII as well as several subsequent electron acceptors. D2 is needed for assembly of a stable PSII complex. In Zea mays (Maize), this protein is Photosystem II D2 protein.